The primary structure comprises 205 residues: FMN-dependent NADH:quinone oxidoreductase (205 aa).

FMN-binding positions include serine 10, 16-18 (SHS), and 96-99 (MYNF).

It belongs to the azoreductase type 1 family. Homodimer. FMN is required as a cofactor.

The catalysed reaction is 2 a quinone + NADH + H(+) = 2 a 1,4-benzosemiquinone + NAD(+). It carries out the reaction N,N-dimethyl-1,4-phenylenediamine + anthranilate + 2 NAD(+) = 2-(4-dimethylaminophenyl)diazenylbenzoate + 2 NADH + 2 H(+). Functionally, quinone reductase that provides resistance to thiol-specific stress caused by electrophilic quinones. In terms of biological role, also exhibits azoreductase activity. Catalyzes the reductive cleavage of the azo bond in aromatic azo compounds to the corresponding amines. This is FMN-dependent NADH:quinone oxidoreductase from Nostoc punctiforme (strain ATCC 29133 / PCC 73102).